The sequence spans 293 residues: MATNKSVGVFSSASLAVEYVDSLLPENPLQEPFKNAWVYMLDNYTKFQIATWGSLIVHEAIYFLFSLPGFLFQFIPYMRKYKIQKDKPETFEGQWKCLKKILFNHFFIQLPLICGTYYFTEFFNIPYDWERMPRWYLTLARCLGCAVIEDTWHYFLHRLLHHKRIYKYIHKVHHEFQAPFGIEAEYAHPLETLILGTGFFIGIVLLCDHVILLWAWVTIRLLETIDVHSGYDIPLNPLNLVPFYTGARHHDFHHMNFIGNYASTFTWWDKLFGTDAQYHAYIEKSKKLGKKSD.

2 helical membrane-spanning segments follow: residues 55-75 (LIVH…FQFI) and 100-120 (KILF…YYFT). Residues 144–274 (GCAVIEDTWH…FTWWDKLFGT (131 aa)) enclose the Fatty acid hydroxylase domain. The short motif at 157–161 (HRLLH) is the Histidine box-1 element. Residues 170–174 (HKVHH) carry the Histidine box-2 motif. The helical transmembrane segment at 199 to 219 (FFIGIVLLCDHVILLWAWVTI) threads the bilayer. A Histidine box-3 motif is present at residues 249 to 255 (HHDFHHM).

It belongs to the sterol desaturase family. Requires Fe cation as cofactor. In terms of processing, ubiquitinated by MARCHF6, leading to proteasomal degradation.

It localises to the endoplasmic reticulum membrane. It carries out the reaction 4,4-dimethyl-5alpha-cholest-7-en-3beta-ol + 6 Fe(II)-[cytochrome b5] + 3 O2 + 5 H(+) = 4alpha-carboxy-4beta-methyl-5alpha-cholest-7-ene-3beta-ol + 6 Fe(III)-[cytochrome b5] + 4 H2O. The enzyme catalyses 4,4-dimethyl-5alpha-cholesta-8,24-dien-3beta-ol + 6 Fe(II)-[cytochrome b5] + 3 O2 + 5 H(+) = 4beta-methylzymosterol-4alpha-carboxylate + 6 Fe(III)-[cytochrome b5] + 4 H2O. The catalysed reaction is 4alpha-methylzymosterol + 6 Fe(II)-[cytochrome b5] + 3 O2 + 5 H(+) = 4alpha-carboxyzymosterol + 6 Fe(III)-[cytochrome b5] + 4 H2O. It catalyses the reaction 4alpha-methyl-5alpha-cholest-7-en-3beta-ol + 6 Fe(II)-[cytochrome b5] + 3 O2 + 5 H(+) = 4alpha-carboxy-5alpha-cholest-7-en-3beta-ol + 6 Fe(III)-[cytochrome b5] + 4 H2O. It carries out the reaction 4,4-dimethyl-5alpha-cholest-8-en-3beta-ol + 6 Fe(II)-[cytochrome b5] + 3 O2 + 5 H(+) = 4alpha-carboxy-4beta-methyl-5alpha-cholest-8-en-3beta-ol + 6 Fe(III)-[cytochrome b5] + 4 H2O. The enzyme catalyses 4alpha-methyl-5alpha-cholest-8-en-3beta-ol + 6 Fe(II)-[cytochrome b5] + 3 O2 + 5 H(+) = 4alpha-carboxy-5alpha-cholest-8-ene-3beta-ol + 6 Fe(III)-[cytochrome b5] + 4 H2O. The protein operates within steroid biosynthesis; zymosterol biosynthesis; zymosterol from lanosterol: step 3/6. Its pathway is steroid biosynthesis; cholesterol biosynthesis. In terms of biological role, catalyzes the three-step monooxygenation required for the demethylation of 4,4-dimethyl and 4alpha-methylsterols, which can be subsequently metabolized to cholesterol. The chain is Methylsterol monooxygenase 1 (Msmo1) from Mus musculus (Mouse).